A 156-amino-acid chain; its full sequence is Small ribosomal subunit protein bS6 (156 aa).

Positions 98 to 156 (GHDFRDQRSHHGQAGEFRKREPQQKSKEQSEFSKEKKSFSKSVTKKTVVSKPKETKEEK) are disordered. Residues 113–135 (EFRKREPQQKSKEQSEFSKEKKS) show a composition bias toward basic and acidic residues. A compositionally biased stretch (low complexity) spans 137–147 (SKSVTKKTVVS).

It belongs to the bacterial ribosomal protein bS6 family.

In terms of biological role, binds together with bS18 to 16S ribosomal RNA. In Mycoplasmopsis synoviae (strain 53) (Mycoplasma synoviae), this protein is Small ribosomal subunit protein bS6.